Reading from the N-terminus, the 369-residue chain is Queuine tRNA-ribosyltransferase (369 aa).

Aspartate 89 functions as the Proton acceptor in the catalytic mechanism. Residues 89 to 93, aspartate 142, glutamine 184, and glycine 211 each bind substrate; that span reads DSGGF. Residues 242-248 are RNA binding; that stretch reads GGGSPEL. Aspartate 261 serves as the catalytic Nucleophile. The RNA binding; important for wobble base 34 recognition stretch occupies residues 266–270; sequence TRIAR. Positions 299, 301, 304, and 330 each coordinate Zn(2+).

Belongs to the queuine tRNA-ribosyltransferase family. In terms of assembly, homodimer. Within each dimer, one monomer is responsible for RNA recognition and catalysis, while the other monomer binds to the replacement base PreQ1. It depends on Zn(2+) as a cofactor.

It carries out the reaction 7-aminomethyl-7-carbaguanine + guanosine(34) in tRNA = 7-aminomethyl-7-carbaguanosine(34) in tRNA + guanine. It functions in the pathway tRNA modification; tRNA-queuosine biosynthesis. Functionally, catalyzes the base-exchange of a guanine (G) residue with the queuine precursor 7-aminomethyl-7-deazaguanine (PreQ1) at position 34 (anticodon wobble position) in tRNAs with GU(N) anticodons (tRNA-Asp, -Asn, -His and -Tyr). Catalysis occurs through a double-displacement mechanism. The nucleophile active site attacks the C1' of nucleotide 34 to detach the guanine base from the RNA, forming a covalent enzyme-RNA intermediate. The proton acceptor active site deprotonates the incoming PreQ1, allowing a nucleophilic attack on the C1' of the ribose to form the product. After dissociation, two additional enzymatic reactions on the tRNA convert PreQ1 to queuine (Q), resulting in the hypermodified nucleoside queuosine (7-(((4,5-cis-dihydroxy-2-cyclopenten-1-yl)amino)methyl)-7-deazaguanosine). In Thermotoga sp. (strain RQ2), this protein is Queuine tRNA-ribosyltransferase.